Consider the following 274-residue polypeptide: Rhamnulose-1-phosphate aldolase (274 aa).

Residue glutamate 117 is part of the active site. Histidine 141, histidine 143, and histidine 212 together coordinate Zn(2+).

It belongs to the aldolase class II family. RhaD subfamily. In terms of assembly, homotetramer. Zn(2+) is required as a cofactor.

It is found in the cytoplasm. The catalysed reaction is L-rhamnulose 1-phosphate = (S)-lactaldehyde + dihydroxyacetone phosphate. It participates in carbohydrate degradation; L-rhamnose degradation; glycerone phosphate from L-rhamnose: step 3/3. Functionally, catalyzes the reversible cleavage of L-rhamnulose-1-phosphate to dihydroxyacetone phosphate (DHAP) and L-lactaldehyde. The sequence is that of Rhamnulose-1-phosphate aldolase from Escherichia coli (strain SMS-3-5 / SECEC).